We begin with the raw amino-acid sequence, 256 residues long: Small ribosomal subunit protein eS1 (256 aa).

At Ala2 the chain carries N-acetylalanine; partial.

It belongs to the eukaryotic ribosomal protein eS1 family. As to quaternary structure, component of the small ribosomal subunit. Mature ribosomes consist of a small (40S) and a large (60S) subunit. The 40S subunit contains about 33 different proteins and 1 molecule of RNA (18S). The 60S subunit contains about 49 different proteins and 3 molecules of RNA (25S, 5.8S and 5S).

It is found in the cytoplasm. The protein is Small ribosomal subunit protein eS1 (rps1) of Botryotinia fuckeliana (strain B05.10) (Noble rot fungus).